Here is a 314-residue protein sequence, read N- to C-terminus: Oxidoreductase poxI (314 aa).

Belongs to the NmrA-type oxidoreductase family. Isoflavone reductase subfamily.

The protein operates within secondary metabolite biosynthesis. In terms of biological role, oxidoreductase; part of the gene cluster that mediates the biosynthesis of oxaleimides, cytotoxic compounds containing an unusual disubstituted succinimide moiety. The first step of the pathway is provided by the HR-PKS poxF that serves in a new mode of collaborative biosynthesis with the PKS-NRPS poxE, by providing the olefin containing amino acid substrate via the synthesis of an ACP-bound dec-4-enoate. The cytochrome P450 monooxygenase poxM-catalyzed oxidation at the alpha-position creates the enzyme-bound 2-hydroxydec-4-enoyl-ACP thioester, which may be prone to spontaneous hydrolysis to yield 2-hydroxydec-4-enoic acid due to increased electrophilicity of the carbonyl. 2-hydroxydec-4-enoic acid can then be further oxidized by poxM to yield the alpha-ketoacid 2-oxodec-4-enoicacid, which is reductively aminated by the aminotransferase poxL to yield (S,E)-2-aminodec-4-enoic acid. The Hybrid PKS-NRPS synthetase poxE then performs condensation between the octaketide product of its PKS modules and the amino group of (S,E)-2-aminodec-4-enoic acid which is activated and incorporated by the adenylation domain. The resulting aminoacyl product can be cyclized by the Diels-Alderase PoxQ and reductively released by the reductive (R) domain of poxE to yield an aldehyde intermediate. The released aldehyde is then substrate for a Knoevenagel condensation by the hydrolyase poxO followed by an oxidation at the 5-position of the pyrrolidone ring. The presence of the olefin from the amino acid building block allows for migration of the substituted allyl group to occur. This allylic transposition reaction takes place in a conjugate addition, semipinacol-like fashion to yield a succinimide intermediate. Iterative two-electron oxidations of the C7 methyl of the succinimide intermediate to the carboxylic acid can be catalyzed by one of two remaining cytochrome P450 monooxygenasess poxC or poxD to yield oxaleimide A. Subsequent oxidation yields the maleimide scaffold oxaleimide I. Both oxaleimide A and oxaleimide I can undergo oxidative modifications in the decalin ring to yield the series of products oxaleimides B to H. This is Oxidoreductase poxI from Penicillium oxalicum (strain 114-2 / CGMCC 5302) (Penicillium decumbens).